The primary structure comprises 822 residues: Putative ESX-1 scaffolding and assembly protein SaeB (822 aa).

Functionally, may be involved in assembly of the ESX-1 / type VII specialized secretion system (T7SS), which exports several proteins including EsxA and EsxB. Involved in DNA conjugation in recipient (MKD8) but not donor (mc(2)155) strain. In Mycolicibacterium smegmatis (strain MKD8) (Mycobacterium smegmatis), this protein is Putative ESX-1 scaffolding and assembly protein SaeB (saeB).